The chain runs to 262 residues: MTQPSKTTKLTKDEVDRLISDYQTKQDEQAQETLVRVYTNLVDMLAKKYSKGKSFHEDLRQVGMIGLLGAIKRYDPVVGKSFEAFAIPTIIGEIKRFLRDKTWSVHVPRRIKELGPRIKMAVDQLTTETQRSPKVEEIAEFLDVSEEEVLETMEMGKSYQALSVDHSIEADSDGSTVTILDIVGSQEDGYERVNQQLMLQSVLHVLSDREKQIIDLTYIQNKSQKETGDILGISQMHVSRLQRKAVKKLREALIEDPSMELM.

The Polymerase core binding signature appears at 58 to 71 (DLRQVGMIGLLGAI). Residues 224-243 (QKETGDILGISQMHVSRLQR) constitute a DNA-binding region (H-T-H motif).

This sequence belongs to the sigma-70 factor family. SigB subfamily. In terms of assembly, interacts transiently with the RNAP core.

In terms of biological role, sigma factors are initiation factors that promote the attachment of RNA polymerase (RNAP) to specific initiation sites and are then released. Sigma B is not essential for sporulation; rather it is required for maximal expression of ctc and csbA which are transcribed in the early stationary phase under conditions inimical to sporulation. May play a role in the ability of the bacterium to adapt to various stresses but is not essential for its survival under these conditions. Positively regulates expression of its own operon. The second most abundant sigma factor, it associates with RNAP core under all growth phases. This chain is RNA polymerase sigma-B factor (sigB), found in Bacillus subtilis (strain 168).